The sequence spans 366 residues: Phospho-N-acetylmuramoyl-pentapeptide-transferase (366 aa).

The next 10 helical transmembrane spans lie at 3–23, 52–72, 80–100, 120–140, 161–181, 197–217, 238–258, 262–282, 287–307, and 341–361; these read QIII…PVLI, MGGI…GIVG, LTAS…LGFA, LIGQ…FPNA, LAIG…YILI, LAAG…FWQF, LAIL…WNAA, IFMG…LSVA, LLMI…VIQV, and FWLI…GEWL.

The protein belongs to the glycosyltransferase 4 family. MraY subfamily. Requires Mg(2+) as cofactor.

The protein resides in the cell membrane. It catalyses the reaction UDP-N-acetyl-alpha-D-muramoyl-L-alanyl-gamma-D-glutamyl-meso-2,6-diaminopimeloyl-D-alanyl-D-alanine + di-trans,octa-cis-undecaprenyl phosphate = di-trans,octa-cis-undecaprenyl diphospho-N-acetyl-alpha-D-muramoyl-L-alanyl-D-glutamyl-meso-2,6-diaminopimeloyl-D-alanyl-D-alanine + UMP. The protein operates within cell wall biogenesis; peptidoglycan biosynthesis. In terms of biological role, catalyzes the initial step of the lipid cycle reactions in the biosynthesis of the cell wall peptidoglycan: transfers peptidoglycan precursor phospho-MurNAc-pentapeptide from UDP-MurNAc-pentapeptide onto the lipid carrier undecaprenyl phosphate, yielding undecaprenyl-pyrophosphoryl-MurNAc-pentapeptide, known as lipid I. The polypeptide is Phospho-N-acetylmuramoyl-pentapeptide-transferase (Corynebacterium diphtheriae (strain ATCC 700971 / NCTC 13129 / Biotype gravis)).